Consider the following 66-residue polypeptide: Beta-mammal toxin Co2 (66 aa).

An LCN-type CS-alpha/beta domain is found at Lys-1–Asn-66. 4 disulfide bridges follow: Cys-12–Cys-65, Cys-16–Cys-41, Cys-25–Cys-46, and Cys-29–Cys-48.

In terms of tissue distribution, expressed by the venom gland.

Its subcellular location is the secreted. Its function is as follows. Beta toxins bind voltage-independently at site-4 of sodium channels (Nav) and shift the voltage of activation toward more negative potentials thereby affecting sodium channel activation and promoting spontaneous and repetitive firing. This toxin acts on human Nav1.1/SCN1A, Nav1.2/SCN2A, Nav1.4/SCN4A and Nav1.6/SCN8A voltage-gated sodium channels. Also, it reduces the peak of sodium currents in Nav1.5/SCN5A at all potentials. In vivo, is lethal to mice when intraperitoneally injected at a dose of 5ug. No activity is observed when injected into crickets or woodlice. The chain is Beta-mammal toxin Co2 from Centruroides ornatus (Scorpion).